The primary structure comprises 80 residues: Inner kinetochore subunit MHF2 (80 aa).

This sequence belongs to the CENP-X/MHF2 family. As to quaternary structure, the MHF histone-fold complex is a heterotetramer of 2 MHF1-MHF2 heterodimers. Together with MPH1/FANCM, forms the FANCM-MHF complex. Component of the inner kinetochore constitutive centromere-associated network (CCAN) (also known as central kinetochore CTF19 complex in yeast), which is composed of at least AME1, CHL4, CNN1, CTF3, CTF19, IML3, MCM16, MCM21, MCM22, MHF1, MHF2, MIF2, NKP1, NKP2, OKP1 and WIP1.

In terms of biological role, DNA-binding component of a FANCM-MHF complex involved in DNA damage repair and genome maintenance. FANCM-MHF promotes gene conversion at blocked replication forks, probably by reversal of the stalled fork. Component of the kinetochore, a multiprotein complex that assembles on centromeric DNA and attaches chromosomes to spindle microtubules, mediating chromosome segregation and sister chromatid segregation during meiosis and mitosis. Component of the inner kinetochore constitutive centromere-associated network (CCAN), which serves as a structural platform for outer kinetochore assembly. This Saccharomyces cerevisiae (strain ATCC 204508 / S288c) (Baker's yeast) protein is Inner kinetochore subunit MHF2.